We begin with the raw amino-acid sequence, 682 residues long: DNA-directed RNA polymerase subunit beta' (682 aa).

4 residues coordinate Zn(2+): cysteine 69, cysteine 71, cysteine 87, and cysteine 90. Residues aspartate 489, aspartate 491, and aspartate 493 each coordinate Mg(2+).

This sequence belongs to the RNA polymerase beta' chain family. RpoC1 subfamily. In terms of assembly, in plastids the minimal PEP RNA polymerase catalytic core is composed of four subunits: alpha, beta, beta', and beta''. When a (nuclear-encoded) sigma factor is associated with the core the holoenzyme is formed, which can initiate transcription. It depends on Mg(2+) as a cofactor. Zn(2+) is required as a cofactor.

It is found in the plastid. The protein localises to the chloroplast. It catalyses the reaction RNA(n) + a ribonucleoside 5'-triphosphate = RNA(n+1) + diphosphate. DNA-dependent RNA polymerase catalyzes the transcription of DNA into RNA using the four ribonucleoside triphosphates as substrates. The chain is DNA-directed RNA polymerase subunit beta' from Vitis vinifera (Grape).